A 522-amino-acid polypeptide reads, in one-letter code: Anti-sigma-I factor RsgI4 (522 aa).

The Cytoplasmic segment spans residues 1–51 (MNLGVVIKIKRKKAIIVTETGEFKAVNARNGMFLGQKILFDQQDVIENNRN). Residues 2–49 (NLGVVIKIKRKKAIIVTETGEFKAVNARNGMFLGQKILFDQQDVIENN) enclose the RsgI N-terminal anti-sigma domain. The helical transmembrane segment at 52 to 72 (GIGLAYSAAIAGMVAVFVFMF) threads the bilayer. The Extracellular segment spans residues 73 to 522 (TYFGLHNFNG…SGILKWGREP (450 aa)). The segment covering 311-361 (SAKTPERATTVPVNTPVKPTDAPTKSPATATATATRAPVKATATPAKTLKP) has biased composition (low complexity). The disordered stretch occupies residues 311–371 (SAKTPERATT…SDTPVKTPDG (61 aa)). Residues 371–522 (GEQSVKVRFY…SGILKWGREP (152 aa)) form the CBM3 domain.

In terms of assembly, interacts (via RsgI N-terminal anti-sigma domain) with SigI4.

Its subcellular location is the cell membrane. In terms of biological role, anti-sigma factor for SigI4. Negatively regulates SigI4 activity through direct interaction. Binding of the polysaccharide substrate to the extracellular C-terminal sensing domain of RsgI4 may induce a conformational change in its N-terminal cytoplasmic region, leading to the release and activation of SigI4. The protein is Anti-sigma-I factor RsgI4 of Acetivibrio thermocellus (strain ATCC 27405 / DSM 1237 / JCM 9322 / NBRC 103400 / NCIMB 10682 / NRRL B-4536 / VPI 7372) (Clostridium thermocellum).